The sequence spans 229 residues: ABC transporter I family member 1 (229 aa).

The region spanning 11-228 (LLLQNVSCMR…LIDMLDRADI (218 aa)) is the ABC transporter domain. ATP is bound at residue 43–50 (GTNGSGKS).

This sequence belongs to the ABC transporter superfamily. ABCI family.

The protein resides in the membrane. It catalyses the reaction heme b(in) + ATP + H2O = heme b(out) + ADP + phosphate + H(+). In terms of biological role, part of the ABC transporter complex CcmAB involved in the biogenesis of c-type cytochromes; once thought to export heme, this seems not to be the case, but its exact role is uncertain. Responsible for energy coupling to the transport system. This is ABC transporter I family member 1 (ABCI1) from Arabidopsis thaliana (Mouse-ear cress).